A 167-amino-acid polypeptide reads, in one-letter code: Small ribosomal subunit protein uS9 (167 aa).

Disordered regions lie at residues 1 to 45 (MSEY…GGAT) and 137 to 167 (KAGF…FSKR). Positions 9 to 19 (DTVEDITESDE) are enriched in acidic residues. Positions 20–36 (FTGTYTSESSTPATGGN) are enriched in polar residues. Over residues 143-152 (RDPRATERKK) the composition is skewed to basic and acidic residues. The segment covering 153–167 (AGLKKARKAPQFSKR) has biased composition (basic residues).

It belongs to the universal ribosomal protein uS9 family.

The sequence is that of Small ribosomal subunit protein uS9 from Kineococcus radiotolerans (strain ATCC BAA-149 / DSM 14245 / SRS30216).